The sequence spans 180 residues: Putative adenylate kinase (180 aa).

G10, G12, K13, T14, and T15 together coordinate ATP. The NMP stretch occupies residues 30–50; the sequence is SVKELALSRGIGERVSDEIEI. The segment at 99 to 109 is LID; it reads ARGYSKKKLAE. 2 residues coordinate ATP: R100 and K138.

Belongs to the adenylate kinase family. AK6 subfamily. In terms of assembly, interacts with uS11. Not a structural component of 40S pre-ribosomes, but transiently interacts with them by binding to uS11.

The enzyme catalyses AMP + ATP = 2 ADP. It carries out the reaction ATP + H2O = ADP + phosphate + H(+). Functionally, broad-specificity nucleoside monophosphate (NMP) kinase that catalyzes the reversible transfer of the terminal phosphate group between nucleoside triphosphates and monophosphates. Also has ATPase activity. Involved in the late maturation steps of the 30S ribosomal particles, specifically 16S rRNA maturation. While NMP activity is not required for ribosome maturation, ATPase activity is. Associates transiently with small ribosomal subunit protein uS11. ATP hydrolysis breaks the interaction with uS11. May temporarily remove uS11 from the ribosome to enable a conformational change of the ribosomal RNA that is needed for the final maturation step of the small ribosomal subunit. The polypeptide is Putative adenylate kinase (Thermococcus onnurineus (strain NA1)).